A 53-amino-acid chain; its full sequence is U1-poneritoxin-Dq5a (53 aa).

A signal peptide spans 1–23 (MNIRLMFTLIALLVLTVSFSGAN). Disulfide bonds link cysteine 25–cysteine 42, cysteine 32–cysteine 47, and cysteine 41–cysteine 52.

In terms of tissue distribution, expressed by the venom gland.

The protein localises to the secreted. Its function is as follows. May have neurotoxic activity. This Dinoponera quadriceps (South American ant) protein is U1-poneritoxin-Dq5a.